We begin with the raw amino-acid sequence, 92 residues long: Small ribosomal subunit protein bS20 (92 aa).

The tract at residues 1 to 22 is disordered; the sequence is MANSPQSKKRARQAEARAAVNK.

This sequence belongs to the bacterial ribosomal protein bS20 family.

Functionally, binds directly to 16S ribosomal RNA. In Cereibacter sphaeroides (strain ATCC 17029 / ATH 2.4.9) (Rhodobacter sphaeroides), this protein is Small ribosomal subunit protein bS20.